Consider the following 210-residue polypeptide: Cuticle collagen 2C (210 aa).

The disordered stretch occupies residues 11 to 210 (CTGGQAGPPG…GVFFEDGTRR (200 aa)). 2 stretches are compositionally biased toward pro residues: residues 40–76 (PGRP…PGEP) and 88–103 (DAPP…PGPP). The span at 105–122 (KAGAPGAAGQPGANAPSE) shows a compositional bias: low complexity. Residues 123-144 (PLVPGPPGPPGPTGPEGPPGPN) are compositionally biased toward pro residues. Residues 167–179 (HPGAPGNAGHPGQ) are compositionally biased toward low complexity.

It belongs to the cuticular collagen family.

Nematode cuticles are composed largely of collagen-like proteins. The cuticle functions both as an exoskeleton and as a barrier to protect the worm from its environment. The polypeptide is Cuticle collagen 2C (2C) (Haemonchus contortus (Barber pole worm)).